The sequence spans 271 residues: Short-chain type dehydrogenase/reductase (271 aa).

Residue 25 to 49 (IVTGASRGIGREIALNMAEKGAKVV) participates in NAD(+) binding. Ser-166 lines the substrate pocket. Tyr-179 (proton acceptor) is an active-site residue.

It belongs to the short-chain dehydrogenases/reductases (SDR) family.

The sequence is that of Short-chain type dehydrogenase/reductase from Picea abies (Norway spruce).